The chain runs to 230 residues: MILIEHILGNVKKDPVWQEKLKDATFDLLVLDQREAQKSRCRKLSTQGLDLGISLDRHVVLADGDVLAWDEKTNVAVVVQINLRDVMVIDLSELKSRSPDELIKTCFELGHALGNQHWKAVTKNNEVYVPLTVATTMMDSVMRTHGFQHLPFRFVKGAEILPLLSNSEARLLFGGAEDTDTHVHVASPLDEPHGSGLHVHAIHSHGTGHTHSHDHDHSHSHGDHDHDHKH.

Over residues 200–210 the composition is skewed to basic residues; the sequence is HAIHSHGTGHT. A disordered region spans residues 200 to 230; it reads HAIHSHGTGHTHSHDHDHSHSHGDHDHDHKH. Over residues 211-230 the composition is skewed to basic and acidic residues; it reads HSHDHDHSHSHGDHDHDHKH.

Belongs to the UreE family.

Its subcellular location is the cytoplasm. Involved in urease metallocenter assembly. Binds nickel. Probably functions as a nickel donor during metallocenter assembly. The sequence is that of Urease accessory protein UreE from Yersinia enterocolitica serotype O:8 / biotype 1B (strain NCTC 13174 / 8081).